The primary structure comprises 361 residues: Glutaminyl-peptide cyclotransferase (361 aa).

The N-terminal stretch at 1–28 (MAGCRDPRVVDTLHLLLLVAVLPLAVSG) is a signal peptide. The N-linked (GlcNAc...) asparagine glycan is linked to Asn-49. Cys-139 and Cys-164 are joined by a disulfide. Asp-159 is a Zn(2+) binding site. N-linked (GlcNAc...) asparagine glycosylation is present at Asn-183. Glu-201 functions as the Proton acceptor in the catalytic mechanism. Glu-202 is a Zn(2+) binding site. Asp-248 (proton acceptor) is an active-site residue. His-330 contacts Zn(2+).

The protein belongs to the glutaminyl-peptide cyclotransferase family. In terms of tissue distribution, expressed mainly in brain tissue.

The protein localises to the secreted. The enzyme catalyses N-terminal L-glutaminyl-[peptide] = N-terminal 5-oxo-L-prolyl-[peptide] + NH4(+). Responsible for the biosynthesis of pyroglutamyl peptides. Has a bias against acidic and tryptophan residues adjacent to the N-terminal glutaminyl residue and a lack of importance of chain length after the second residue. Also catalyzes N-terminal pyroglutamate formation. The polypeptide is Glutaminyl-peptide cyclotransferase (QPCT) (Bos taurus (Bovine)).